The primary structure comprises 162 residues: Probable chemoreceptor glutamine deamidase CheD (162 aa).

Belongs to the CheD family.

The catalysed reaction is L-glutaminyl-[protein] + H2O = L-glutamyl-[protein] + NH4(+). Its function is as follows. Probably deamidates glutamine residues to glutamate on methyl-accepting chemotaxis receptors (MCPs), playing an important role in chemotaxis. This is Probable chemoreceptor glutamine deamidase CheD from Syntrophotalea carbinolica (strain DSM 2380 / NBRC 103641 / GraBd1) (Pelobacter carbinolicus).